Here is a 126-residue protein sequence, read N- to C-terminus: Nascent polypeptide-associated complex protein (126 aa).

The region spanning 10–77 (PRMMKQMQKM…AKKVAKEEEK (68 aa)) is the NAC-A/B domain.

This sequence belongs to the NAC-alpha family. Homodimer. Interacts with the ribosome. Binds ribosomal RNA.

Functionally, contacts the emerging nascent chain on the ribosome. The sequence is that of Nascent polypeptide-associated complex protein from Methanococcus maripaludis (strain C7 / ATCC BAA-1331).